We begin with the raw amino-acid sequence, 268 residues long: MSAALFSLDSPARGAPWPTEPAAFYEPGRVGKPGRGPEPGDLGEPGSTTPAMYDDESAIDFSAYIDSMAAVPTLELCHDEIFADLFNSNHKAAGAGSLELLQGGPTRPPGVGSIARGPLKREPDWGDGDAPGSLLPAQVAVCAQTVVSLAAAAQPTPPTSPEPPRGSPGPSLAPGPVREKGAGKRGPDRGSPEYRQRRERNNIAVRKSRDKAKRRNQEMQQKLVELSAENEKLHQRVEQLTRDLASLRQFFKELPSPPFLPPTGTDCR.

3 disordered regions span residues 1–50 (MSAA…STTP), 98–132 (LELLQGGPTRPPGVGSIARGPLKREPDWGDGDAPG), and 152–223 (AAQP…QQKL). N-acetylserine is present on Ser-2. Lys-120 is covalently cross-linked (Glycyl lysine isopeptide (Lys-Gly) (interchain with G-Cter in SUMO)). Over residues 155 to 173 (PTPPTSPEPPRGSPGPSLA) the composition is skewed to pro residues. A compositionally biased stretch (basic and acidic residues) spans 177–201 (VREKGAGKRGPDRGSPEYRQRRERN). The 64-residue stretch at 191-254 (SPEYRQRRER…ASLRQFFKEL (64 aa)) folds into the bZIP domain. The interval 195–222 (RQRRERNNIAVRKSRDKAKRRNQEMQQK) is basic motif. Residues 226-254 (LSAENEKLHQRVEQLTRDLASLRQFFKEL) are leucine-zipper.

This sequence belongs to the bZIP family. C/EBP subfamily. Binds DNA as a homodimer and as a heterodimer. Can form stable heterodimers with CEBPA, CEBPB and CEBPE. Directly interacts with SPI1/PU.1; this interaction does not affect DNA-binding properties of each partner. Interacts with PRDM16. In terms of tissue distribution, ubiquitously expressed.

The protein resides in the nucleus. Functionally, transcription activator that recognizes two different DNA motifs: the CCAAT homology common to many promoters and the enhanced core homology common to many enhancers. Important transcription factor regulating the expression of genes involved in immune and inflammatory responses. Transcriptional activator that enhances IL6 transcription alone and as heterodimer with CEBPB. The protein is CCAAT/enhancer-binding protein delta (Cebpd) of Rattus norvegicus (Rat).